We begin with the raw amino-acid sequence, 561 residues long: Putative transport protein YbjL (561 aa).

A run of 5 helical transmembrane segments spans residues 8–28, 32–52, 66–86, 94–114, and 158–178; these read LLNG…LCLG, LGSV…LLGQ, FMLF…SIFF, MLAL…GKLF, and NLSL…IVGA. RCK C-terminal domains are found at residues 200–288 and 292–373; these read RGLD…SFRN and VFDR…RIGF. 5 helical membrane-spanning segments follow: residues 383 to 403, 406 to 426, 447 to 467, 475 to 495, and 540 to 560; these read LLAF…TFQF, FSFG…LGFL, FGLM…ISNG, MLIA…LFGA, and AIAN…WPGL.

Belongs to the AAE transporter (TC 2.A.81) family. YbjL subfamily.

The protein resides in the cell membrane. In Salmonella agona (strain SL483), this protein is Putative transport protein YbjL.